Here is a 62-residue protein sequence, read N- to C-terminus: Large ribosomal subunit protein bL28 (62 aa).

Belongs to the bacterial ribosomal protein bL28 family.

The sequence is that of Large ribosomal subunit protein bL28 from Streptococcus mutans serotype c (strain ATCC 700610 / UA159).